The primary structure comprises 105 residues: Large ribosomal subunit protein eL30 (105 aa).

It belongs to the eukaryotic ribosomal protein eL30 family.

The protein is Large ribosomal subunit protein eL30 (RPL30) of Trypanosoma brucei brucei.